The following is a 350-amino-acid chain: Ceramide synthase 1 (350 aa).

Position 2 is an N-acetylalanine (Ala2). 6 consecutive transmembrane segments (helical) span residues 53–73 (AHLA…WTAL), 103–123 (AWKF…LFGT), 148–168 (IAAA…ATLY), 176–196 (SVVM…SYAF), 239–259 (AADL…LYWF), and 287–307 (LLLL…AFAA). The 215-residue stretch at 97–311 (AKMPESAWKF…IVAFAAKVLT (215 aa)) folds into the TLC domain.

Post-translationally, acetylated. Deacetylation by SIRT3 increases enzyme activity and promotes mitochondrial ceramide accumulation.

Its subcellular location is the endoplasmic reticulum membrane. It carries out the reaction a sphingoid base + octadecanoyl-CoA = an N-octadecanoyl-sphingoid base + CoA + H(+). The enzyme catalyses sphinganine + octadecanoyl-CoA = N-(octadecanoyl)-sphinganine + CoA + H(+). The catalysed reaction is hexadecasphinganine + octadecanoyl-CoA = N-octadecanoylhexadecasphinganine + CoA + H(+). It catalyses the reaction sphing-4-enine + octadecanoyl-CoA = N-octadecanoylsphing-4-enine + CoA + H(+). It carries out the reaction heptadecasphing-4-enine + octadecanoyl-CoA = N-octadecanoyl-heptadecasphing-4-enine + CoA + H(+). The enzyme catalyses 2-hydroxyoctadecanoyl-CoA + sphinganine = N-(2-hydroxyoctadecanoyl)-sphinganine + CoA + H(+). The catalysed reaction is eicosanoyl-CoA + sphinganine = N-eicosanoylsphinganine + CoA + H(+). It participates in lipid metabolism; sphingolipid metabolism. Its activity is regulated as follows. Inhibited by fumonisin B1. Functionally, ceramide synthase that catalyzes the transfer of the acyl chain from acyl-CoA to a sphingoid base, with high selectivity toward stearoyl-CoA (octadecanoyl-CoA; C18:0-CoA). N-acylates sphinganine and sphingosine bases to form dihydroceramides and ceramides in de novo synthesis and salvage pathways, respectively. Plays a predominant role in skeletal muscle in regulating C18 ceramide and dihydroceramide levels with an impact on whole-body glucose metabolism and insulin sensitivity. Protects from diet-induced obesity by suppressing the uptake of glucose in multiple organs in a FGF21-dependent way. Generates C18 ceramides in the brain, playing a critical role in cerebellar development and Purkinje cell function. In response to cellular stress mediates mitophagy, a known defense mechanism against cell transformation and aging. Upon mitochondria fission, generates C18 ceramides that anchor lipidated MAP1LC3B/LC3B-II autophagolysosomes to outer mitochondrial membranes to eliminate damaged mitochondria. The polypeptide is Ceramide synthase 1 (Homo sapiens (Human)).